A 330-amino-acid polypeptide reads, in one-letter code: Adenylate isopentenyltransferase 8, chloroplastic (330 aa).

Residues 1–35 (MQNLTSTFVSPSMIPITSPRLRLPPPRSVVPMTTV) constitute a chloroplast transit peptide. 50–57 (GATGSGKS) is a binding site for ATP.

It belongs to the IPP transferase family. Expressed in roots and in immature seeds with highest expression in the chalazal endosperm.

The protein resides in the plastid. Its subcellular location is the chloroplast. The enzyme catalyses dimethylallyl diphosphate + ADP = N(6)-(dimethylallyl)adenosine 5'-diphosphate + diphosphate. It catalyses the reaction dimethylallyl diphosphate + ATP = N(6)-(dimethylallyl)adenosine 5'-triphosphate + diphosphate. Functionally, involved in cytokinin biosynthesis. Catalyzes the transfer of an isopentenyl group from dimethylallyl diphosphate (DMAPP) to ATP and ADP. The protein is Adenylate isopentenyltransferase 8, chloroplastic (IPT8) of Arabidopsis thaliana (Mouse-ear cress).